We begin with the raw amino-acid sequence, 431 residues long: 23S rRNA (uracil(1939)-C(5))-methyltransferase RlmD (431 aa).

The TRAM domain maps to 10 to 68 (RVTTRQIITVKVNDLDSFGQGVARHNGKALFIPGLLPEESAEVIITEDKKQFARARVSR). [4Fe-4S] cluster-binding residues include cysteine 81, cysteine 87, cysteine 90, and cysteine 161. 6 residues coordinate S-adenosyl-L-methionine: glutamine 264, phenylalanine 293, asparagine 298, glutamate 314, asparagine 341, and aspartate 362. Catalysis depends on cysteine 388, which acts as the Nucleophile.

Belongs to the class I-like SAM-binding methyltransferase superfamily. RNA M5U methyltransferase family. RlmD subfamily.

It carries out the reaction uridine(1939) in 23S rRNA + S-adenosyl-L-methionine = 5-methyluridine(1939) in 23S rRNA + S-adenosyl-L-homocysteine + H(+). Catalyzes the formation of 5-methyl-uridine at position 1939 (m5U1939) in 23S rRNA. The sequence is that of 23S rRNA (uracil(1939)-C(5))-methyltransferase RlmD from Salmonella typhimurium (strain LT2 / SGSC1412 / ATCC 700720).